The following is a 248-amino-acid chain: Probable transcriptional regulatory protein trd_1132 (248 aa).

It belongs to the TACO1 family.

It localises to the cytoplasm. The polypeptide is Probable transcriptional regulatory protein trd_1132 (Thermomicrobium roseum (strain ATCC 27502 / DSM 5159 / P-2)).